A 316-amino-acid chain; its full sequence is Melanocyte-stimulating hormone receptor (316 aa).

Residues 1-37 are Extracellular-facing; sequence MAVQGSQRRLLGSLNSTPTAIPQLGLAANQTGARCLE. Asn29 is a glycosylation site (N-linked (GlcNAc...) asparagine). A helical transmembrane segment spans residues 38–63; that stretch reads VSIPDGLFLSLGLVSLVENVLVVATI. Residues 64–72 lie on the Cytoplasmic side of the membrane; sequence AKNRNLHSP. The helical transmembrane segment at 73–93 threads the bilayer; the sequence is MYCFICCLALSDLLVSGSNVV. Over 94–117 the chain is Extracellular; the sequence is DTLLLLLEAGALAARAAVLQQLDN. Residues 118–139 form a helical membrane-spanning segment; it reads VIDVITCSSMLSSLCFLGAIAV. Topologically, residues 140–162 are cytoplasmic; the sequence is DRYISIFYALRYRSIVTLPRARR. A helical transmembrane segment spans residues 163–182; the sequence is AVAAIWVASVLFSTLFIAYY. Topologically, residues 183–190 are extracellular; that stretch reads DHTAVLLC. A helical membrane pass occupies residues 191-210; sequence LVVFFLAMLVLMAVLYVHML. Residues 211–239 are Cytoplasmic-facing; sequence ARACQHAQGIARLHKRQRPVHKGFGLKGP. The chain crosses the membrane as a helical span at residues 240–265; the sequence is VTLTILLGIFFLCWGPFFLHLTLIVL. At 266–278 the chain is on the extracellular side; it reads CPEHPTCGCIFKN. The helical transmembrane segment at 279–299 threads the bilayer; that stretch reads FNLFLALIICNAIIDPLIYAF. Topologically, residues 300–316 are cytoplasmic; it reads HSQELRRTLKEVLTCSW. Cys314 carries S-palmitoyl cysteine lipidation.

The protein belongs to the G-protein coupled receptor 1 family. As to quaternary structure, interacts with MGRN1, but does not undergo MGRN1-mediated ubiquitination; this interaction competes with GNAS-binding and thus inhibits agonist-induced cAMP production. Interacts with OPN3; the interaction results in a decrease in MC1R-mediated cAMP signaling and ultimately a decrease in melanin production in melanocytes.

Its subcellular location is the cell membrane. Its function is as follows. Receptor for MSH (alpha, beta and gamma) and ACTH. The activity of this receptor is mediated by G proteins which activate adenylate cyclase. Mediates melanogenesis, the production of eumelanin (black/brown) and phaeomelanin (red/yellow), via regulation of cAMP signaling in melanocytes. This Gorilla gorilla gorilla (Western lowland gorilla) protein is Melanocyte-stimulating hormone receptor (MC1R).